The sequence spans 559 residues: Dihydroxy-acid dehydratase (559 aa).

Cys49 is a [2Fe-2S] cluster binding site. Residue Asp81 participates in Mg(2+) binding. Position 122 (Cys122) interacts with [2Fe-2S] cluster. Asp123 and Lys124 together coordinate Mg(2+). N6-carboxylysine is present on Lys124. Cys194 provides a ligand contact to [2Fe-2S] cluster. Glu446 is a Mg(2+) binding site. Ser472 (proton acceptor) is an active-site residue.

Belongs to the IlvD/Edd family. Homodimer. [2Fe-2S] cluster is required as a cofactor. Requires Mg(2+) as cofactor.

It catalyses the reaction (2R)-2,3-dihydroxy-3-methylbutanoate = 3-methyl-2-oxobutanoate + H2O. It carries out the reaction (2R,3R)-2,3-dihydroxy-3-methylpentanoate = (S)-3-methyl-2-oxopentanoate + H2O. The protein operates within amino-acid biosynthesis; L-isoleucine biosynthesis; L-isoleucine from 2-oxobutanoate: step 3/4. Its pathway is amino-acid biosynthesis; L-valine biosynthesis; L-valine from pyruvate: step 3/4. Functions in the biosynthesis of branched-chain amino acids. Catalyzes the dehydration of (2R,3R)-2,3-dihydroxy-3-methylpentanoate (2,3-dihydroxy-3-methylvalerate) into 2-oxo-3-methylpentanoate (2-oxo-3-methylvalerate) and of (2R)-2,3-dihydroxy-3-methylbutanoate (2,3-dihydroxyisovalerate) into 2-oxo-3-methylbutanoate (2-oxoisovalerate), the penultimate precursor to L-isoleucine and L-valine, respectively. The protein is Dihydroxy-acid dehydratase of Prochlorococcus marinus (strain MIT 9515).